Consider the following 236-residue polypeptide: Large ribosomal subunit protein uL3 (236 aa).

The span at 139 to 149 shows a compositional bias: low complexity; it reads SVSHRSHGSTG. Residues 139 to 165 are disordered; that stretch reads SVSHRSHGSTGQRQDPGKVFKGKKMAG. Glutamine 152 is modified (N5-methylglutamine).

The protein belongs to the universal ribosomal protein uL3 family. In terms of assembly, part of the 50S ribosomal subunit. Forms a cluster with proteins L14 and L19. Post-translationally, methylated by PrmB.

Functionally, one of the primary rRNA binding proteins, it binds directly near the 3'-end of the 23S rRNA, where it nucleates assembly of the 50S subunit. The protein is Large ribosomal subunit protein uL3 of Pelagibacter ubique (strain HTCC1062).